A 432-amino-acid chain; its full sequence is Cytochrome c biogenesis protein CcsB (432 aa).

A run of 3 helical transmembrane segments spans residues 14 to 34 (LRIA…GTAI), 72 to 92 (SSWF…CSWR), and 162 to 182 (VGPM…VWGS).

Belongs to the Ccs1/CcsB family. As to quaternary structure, may interact with CcsA.

The protein localises to the cellular thylakoid membrane. In terms of biological role, required during biogenesis of c-type cytochromes (cytochrome c6 and cytochrome f) at the step of heme attachment. In Prochlorococcus marinus (strain MIT 9303), this protein is Cytochrome c biogenesis protein CcsB.